Consider the following 504-residue polypeptide: Galactose/methyl galactoside import ATP-binding protein MglA (504 aa).

2 consecutive ABC transporter domains span residues 8 to 247 (LEMN…VGRD) and 258 to 504 (TPGE…TRFI). An ATP-binding site is contributed by 40-47 (GENGAGKS).

It belongs to the ABC transporter superfamily. Galactose/methyl galactoside importer (TC 3.A.1.2.3) family. As to quaternary structure, the complex is composed of one ATP-binding protein (MglA), two transmembrane proteins (MglC) and a solute-binding protein (MglB).

The protein localises to the cell membrane. It catalyses the reaction D-galactose(out) + ATP + H2O = D-galactose(in) + ADP + phosphate + H(+). The enzyme catalyses methyl beta-D-galactoside(out) + ATP + H2O = methyl beta-D-galactoside(in) + ADP + phosphate + H(+). In terms of biological role, part of the ABC transporter complex MglABC involved in galactose/methyl galactoside import. Responsible for energy coupling to the transport system. This is Galactose/methyl galactoside import ATP-binding protein MglA from Clostridium tetani (strain Massachusetts / E88).